We begin with the raw amino-acid sequence, 347 residues long: MRAVTVTPGVPESLRLREVPEPKPGPGQVLLKPLLVGVCGTDKEIIEGRYGKAPEGSDYLILGHEALAEVAALGKGVDNVSEGDLVVPTVRRPLDCQLPVDYCPPGKYLEHGIWGLHGHAAELSITDAAYLVKVPKELRDIAVLTEPLSVVEKGVELGVESYKARLGSPPKTALVLGAGPVGLLASMVLRLMGVSITAVATRPHDSLKARLVEELGGRYIDAVHERLEGEFDLVIEATGAPSLAVQGLERLAPGGVEVLLGVYPPTGELKGLGSLLTDAVLKNKLVVGSVNAGLRHFERALAHLKEANDSLNGFPKRLITKVVPLERYQEAYVWTHDDIKVVLQVQT.

Cys-39 contributes to the Zn(2+) binding site. Thr-41 provides a ligand contact to substrate. 2 residues coordinate Zn(2+): His-64 and Glu-65. Residues Glu-110 and Glu-146 each contribute to the substrate site. Glu-146 provides a ligand contact to Zn(2+). Residues 178–181 (AGPV), 260–262 (LGV), and 289–291 (SVN) each bind NADP(+). Substrate is bound at residue Asn-291.

Belongs to the zinc-containing alcohol dehydrogenase family. Glucose 1-dehydrogenase subfamily. Homodimer. It depends on Zn(2+) as a cofactor.

The catalysed reaction is D-glucose + NAD(+) = D-glucono-1,5-lactone + NADH + H(+). It carries out the reaction D-glucose + NADP(+) = D-glucono-1,5-lactone + NADPH + H(+). Functionally, catalyzes the NAD(P)(+)-dependent oxidation of D-glucose to D-gluconate via gluconolactone. To a lesser extent, is also active with xylose as substrate, but mannose, arabinose, galactose, fructose 6-phosphate, glucose 6-phosphate, glycerinaldehyde 3-phosphate, ribose, sorbitol, ethanol, erythritol, or lactose are not oxidized by the enzyme. Can utilize both NAD(+) and NADP(+) as electron acceptor, with a marked preference for NADP(+). Is involved in the degradation of glucose through a non-phosphorylative variant of the Entner-Doudoroff pathway. This is Glucose 1-dehydrogenase (gdh) from Thermoproteus tenax (strain ATCC 35583 / DSM 2078 / JCM 9277 / NBRC 100435 / Kra 1).